The following is a 182-amino-acid chain: MRIIGFVGMPGSGKSVASDVAREMGIRVVVMGDVVRAEARRRGLEPTDANHGMVGDELRRSEGEDAIARRCLEGLSRDETIVVDGIRSGAEVEYFRSVADRFHLIEIFTPPEQRLRRIAARGRSDDNNCGDLSEALERRDARELGWGMGEAIAAAGMRICNDCTLDEFRERIRVVLEELCRS.

An ATP-binding site is contributed by 8-15 (GMPGSGKS).

It belongs to the UPF0200 family.

The chain is UPF0200 protein Mthe_1012 from Methanothrix thermoacetophila (strain DSM 6194 / JCM 14653 / NBRC 101360 / PT) (Methanosaeta thermophila).